The primary structure comprises 266 residues: Phosphate import ATP-binding protein PstB 1 (266 aa).

The ABC transporter domain maps to 21-261 (ISTQDLSVFY…PKGEITEDYI (241 aa)). Position 54-61 (54-61 (GGSGSGKS)) interacts with ATP.

It belongs to the ABC transporter superfamily. Phosphate importer (TC 3.A.1.7) family. In terms of assembly, the complex is composed of two ATP-binding proteins (PstB), two transmembrane proteins (PstC and PstA) and a solute-binding protein (PstS).

The protein resides in the cell membrane. The enzyme catalyses phosphate(out) + ATP + H2O = ADP + 2 phosphate(in) + H(+). In terms of biological role, part of the ABC transporter complex PstSACB involved in phosphate import. Responsible for energy coupling to the transport system. The polypeptide is Phosphate import ATP-binding protein PstB 1 (Lactobacillus johnsonii (strain CNCM I-12250 / La1 / NCC 533)).